A 325-amino-acid polypeptide reads, in one-letter code: Thiamine-monophosphate kinase (325 aa).

Mg(2+)-binding residues include Asp-27 and Asp-44. Residue His-51 coordinates substrate. Asp-73 provides a ligand contact to Mg(2+). Residues Tyr-103, 120–121 (GD), and Arg-147 contribute to the ATP site. Asp-121 lines the Mg(2+) pocket. Asp-215 serves as a coordination point for Mg(2+). Residue Ser-217 coordinates ATP. Mg(2+) is bound at residue Asp-218. Positions 264 and 321 each coordinate substrate.

Belongs to the thiamine-monophosphate kinase family.

It carries out the reaction thiamine phosphate + ATP = thiamine diphosphate + ADP. Its pathway is cofactor biosynthesis; thiamine diphosphate biosynthesis; thiamine diphosphate from thiamine phosphate: step 1/1. In terms of biological role, catalyzes the ATP-dependent phosphorylation of thiamine-monophosphate (TMP) to form thiamine-pyrophosphate (TPP), the active form of vitamin B1. The chain is Thiamine-monophosphate kinase from Bacillus subtilis (strain 168).